A 558-amino-acid chain; its full sequence is Glucose-6-phosphate isomerase (558 aa).

Alanine 2 bears the N-acetylalanine mark. Lysine 12 carries the N6-acetyllysine modification. Phosphoserine is present on residues serine 86 and serine 107. Lysine 142 is subject to N6-acetyllysine. Glycine 159 to serine 160 is a binding site for D-glucose 6-phosphate. Position 185 is a phosphoserine; by CK2 (serine 185). Serine 210–threonine 215 is a binding site for D-glucose 6-phosphate. Position 250 is a phosphothreonine (threonine 250). Glutamine 354, glutamate 358, and histidine 389 together coordinate D-glucose 6-phosphate. The active-site Proton donor is glutamate 358. Histidine 389 is a catalytic residue. Lysine 454 bears the N6-acetyllysine; alternate mark. Lysine 454 carries the N6-malonyllysine; alternate modification. An N6-succinyllysine; alternate modification is found at lysine 454. Serine 455 is modified (phosphoserine). Residue lysine 519 coordinates D-glucose 6-phosphate. Lysine 519 is a catalytic residue.

Belongs to the GPI family. In terms of assembly, homodimer; in the catalytically active form. Monomer in the secreted form. Post-translationally, phosphorylation at Ser-185 by CK2 has been shown to decrease enzymatic activity and may contribute to secretion by a non-classical secretory pathway. In terms of processing, ISGylated.

Its subcellular location is the cytoplasm. It localises to the secreted. It catalyses the reaction alpha-D-glucose 6-phosphate = beta-D-fructose 6-phosphate. Its pathway is carbohydrate degradation; glycolysis; D-glyceraldehyde 3-phosphate and glycerone phosphate from D-glucose: step 2/4. Its function is as follows. In the cytoplasm, catalyzes the conversion of glucose-6-phosphate to fructose-6-phosphate, the second step in glycolysis, and the reverse reaction during gluconeogenesis. Besides it's role as a glycolytic enzyme, also acts as a secreted cytokine: acts as an angiogenic factor (AMF) that stimulates endothelial cell motility. Acts as a neurotrophic factor, neuroleukin, for spinal and sensory neurons. It is secreted by lectin-stimulated T-cells and induces immunoglobulin secretion. The chain is Glucose-6-phosphate isomerase from Rattus norvegicus (Rat).